A 98-amino-acid chain; its full sequence is Large ribosomal subunit protein uL23 (98 aa).

This sequence belongs to the universal ribosomal protein uL23 family. As to quaternary structure, part of the 50S ribosomal subunit. Contacts protein L29, and trigger factor when it is bound to the ribosome.

In terms of biological role, one of the early assembly proteins it binds 23S rRNA. One of the proteins that surrounds the polypeptide exit tunnel on the outside of the ribosome. Forms the main docking site for trigger factor binding to the ribosome. This is Large ribosomal subunit protein uL23 from Methylorubrum populi (strain ATCC BAA-705 / NCIMB 13946 / BJ001) (Methylobacterium populi).